The primary structure comprises 204 residues: Proteasome subunit beta 2 (204 aa).

The propeptide at 1–6 (MEVLPG) is removed in mature form; by autocatalysis. Thr-7 serves as the catalytic Nucleophile.

This sequence belongs to the peptidase T1B family. As to quaternary structure, the 20S proteasome core is composed of 14 alpha and 14 beta subunits that assemble into four stacked heptameric rings, resulting in a barrel-shaped structure. The two inner rings, each composed of seven catalytic beta subunits, are sandwiched by two outer rings, each composed of seven alpha subunits. The catalytic chamber with the active sites is on the inside of the barrel. Has a gated structure, the ends of the cylinder being occluded by the N-termini of the alpha-subunits. Is capped at one or both ends by the proteasome regulatory ATPase, PAN.

Its subcellular location is the cytoplasm. It catalyses the reaction Cleavage of peptide bonds with very broad specificity.. The formation of the proteasomal ATPase PAN-20S proteasome complex, via the docking of the C-termini of PAN into the intersubunit pockets in the alpha-rings, triggers opening of the gate for substrate entry. Interconversion between the open-gate and close-gate conformations leads to a dynamic regulation of the 20S proteasome proteolysis activity. Its function is as follows. Component of the proteasome core, a large protease complex with broad specificity involved in protein degradation. In Thermofilum pendens (strain DSM 2475 / Hrk 5), this protein is Proteasome subunit beta 2.